The sequence spans 511 residues: 2,3-bisphosphoglycerate-independent phosphoglycerate mutase (511 aa).

Positions 14 and 64 each coordinate Mn(2+). Serine 64 functions as the Phosphoserine intermediate in the catalytic mechanism. Substrate contacts are provided by residues histidine 125, 155 to 156 (RD), arginine 187, arginine 193, 259 to 262 (RADR), and lysine 333. Positions 400, 404, 441, 442, and 460 each coordinate Mn(2+).

It belongs to the BPG-independent phosphoglycerate mutase family. As to quaternary structure, monomer. Mn(2+) is required as a cofactor.

It catalyses the reaction (2R)-2-phosphoglycerate = (2R)-3-phosphoglycerate. Its pathway is carbohydrate degradation; glycolysis; pyruvate from D-glyceraldehyde 3-phosphate: step 3/5. In terms of biological role, catalyzes the interconversion of 2-phosphoglycerate and 3-phosphoglycerate. The protein is 2,3-bisphosphoglycerate-independent phosphoglycerate mutase of Pseudomonas putida (strain ATCC 47054 / DSM 6125 / CFBP 8728 / NCIMB 11950 / KT2440).